The chain runs to 147 residues: Ribonuclease H (147 aa).

The 142-residue stretch at 1 to 142 (MAGKVVMYTD…ADELANRGVR (142 aa)) folds into the RNase H type-1 domain. Residues Asp-10, Glu-48, Asp-70, and Asp-134 each contribute to the Mg(2+) site.

Belongs to the RNase H family. Monomer. Mg(2+) is required as a cofactor.

The protein resides in the cytoplasm. The enzyme catalyses Endonucleolytic cleavage to 5'-phosphomonoester.. Endonuclease that specifically degrades the RNA of RNA-DNA hybrids. This is Ribonuclease H from Marinobacter nauticus (strain ATCC 700491 / DSM 11845 / VT8) (Marinobacter aquaeolei).